A 364-amino-acid polypeptide reads, in one-letter code: Probable protein phosphatase methylesterase 1 (364 aa).

The tract at residues 1 to 53 (MSDDKLDTLPDLQSETSHVTTPHRQNDLLRQAVTHGRPPPVPSTSTSGKKREM) is disordered. Polar residues predominate over residues 11–23 (DLQSETSHVTTPH). Residues S164, D190, and H316 contribute to the active site.

The protein belongs to the AB hydrolase superfamily.

It carries out the reaction [phosphatase 2A protein]-C-terminal L-leucine methyl ester + H2O = [phosphatase 2A protein]-C-terminal L-leucine + methanol + H(+). In terms of biological role, demethylates proteins that have been reversibly carboxymethylated. The sequence is that of Probable protein phosphatase methylesterase 1 from Caenorhabditis elegans.